The sequence spans 486 residues: Galactose-1-phosphate uridylyltransferase (486 aa).

The protein belongs to the galactose-1-phosphate uridylyltransferase type 2 family.

Its subcellular location is the cytoplasm. It carries out the reaction alpha-D-galactose 1-phosphate + UDP-alpha-D-glucose = alpha-D-glucose 1-phosphate + UDP-alpha-D-galactose. It functions in the pathway carbohydrate metabolism; galactose metabolism. The polypeptide is Galactose-1-phosphate uridylyltransferase (Pediococcus pentosaceus (strain ATCC 25745 / CCUG 21536 / LMG 10740 / 183-1w)).